The following is a 329-amino-acid chain: MQFIDQARITVKAGRGGDGIVAFRREKYVPAGGPSGGDGGNGGNVVFQADSNLQTLLDFKFKQIILAENGRRGGPNKCTGASGNNIVLKVPCGTEVRHLETGIIFGDLTIDGESLVVAFGGIGGLGNAHYLSNRNRAPEKFTEGKDGEEWLLHLELKLLAEVGIIGLPNAGKSTLISVLSSARPKIADYPFTTLIPNLGVVRKPSGDGTVFADIPGLIEGAAEGIGLGHEFLRHIERTRLLIHLVDASALNPLEDIEIVENELSAYGHSLIDRPRILVLNKKELLDAKNLKKLERKLNQGSISEVISISAIMSNGLDILLNKIWSKLEI.

The region spanning 1–159 (MQFIDQARIT…WLLHLELKLL (159 aa)) is the Obg domain. One can recognise an OBG-type G domain in the interval 160-328 (AEVGIIGLPN…LLNKIWSKLE (169 aa)). ATP contacts are provided by residues 166–173 (GLPNAGKS), 191–195 (FTTLI), 213–216 (DIPG), 280–283 (NKKE), and 309–311 (SAI). Mg(2+) is bound by residues Ser173 and Thr193.

It belongs to the TRAFAC class OBG-HflX-like GTPase superfamily. OBG GTPase family. In terms of assembly, monomer. Requires Mg(2+) as cofactor.

It localises to the cytoplasm. An essential GTPase which binds GTP, GDP and possibly (p)ppGpp with moderate affinity, with high nucleotide exchange rates and a fairly low GTP hydrolysis rate. Plays a role in control of the cell cycle, stress response, ribosome biogenesis and in those bacteria that undergo differentiation, in morphogenesis control. The sequence is that of GTPase Obg from Prochlorococcus marinus (strain SARG / CCMP1375 / SS120).